A 261-amino-acid chain; its full sequence is Thioesterase TesA (261 aa).

Active-site residues include S104, D208, and H236.

It belongs to the thioesterase family.

The catalysed reaction is a fatty acyl-CoA + H2O = a fatty acid + CoA + H(+). Its function is as follows. Involved in the synthesis of both phthiocerol dimycocerosates (PDIMs) and phenolic glycolipids (PGLs), which are structurally related lipids non-covalently bound to the outer cell wall layer of M.tuberculosis and are important virulence factors. The chain is Thioesterase TesA (tesA) from Mycobacterium leprae (strain TN).